Consider the following 323-residue polypeptide: Protein translocase subunit SecF (323 aa).

The next 6 membrane-spanning stretches (helical) occupy residues 19–39, 138–158, 162–182, 189–209, 244–264, and 269–289; these read GVIV…FKGF, ILSL…RYEW, LASV…VIVF, EVIA…IIIF, LTVF…IIGF, and LIGT…VALL.

This sequence belongs to the SecD/SecF family. SecF subfamily. As to quaternary structure, forms a complex with SecD. Part of the essential Sec protein translocation apparatus which comprises SecA, SecYEG and auxiliary proteins SecDF-YajC and YidC.

Its subcellular location is the cell inner membrane. Functionally, part of the Sec protein translocase complex. Interacts with the SecYEG preprotein conducting channel. SecDF uses the proton motive force (PMF) to complete protein translocation after the ATP-dependent function of SecA. The polypeptide is Protein translocase subunit SecF (Helicobacter pylori (strain J99 / ATCC 700824) (Campylobacter pylori J99)).